A 571-amino-acid polypeptide reads, in one-letter code: Proline--tRNA ligase (571 aa).

Belongs to the class-II aminoacyl-tRNA synthetase family. ProS type 1 subfamily. In terms of assembly, homodimer.

It is found in the cytoplasm. It carries out the reaction tRNA(Pro) + L-proline + ATP = L-prolyl-tRNA(Pro) + AMP + diphosphate. Functionally, catalyzes the attachment of proline to tRNA(Pro) in a two-step reaction: proline is first activated by ATP to form Pro-AMP and then transferred to the acceptor end of tRNA(Pro). As ProRS can inadvertently accommodate and process non-cognate amino acids such as alanine and cysteine, to avoid such errors it has two additional distinct editing activities against alanine. One activity is designated as 'pretransfer' editing and involves the tRNA(Pro)-independent hydrolysis of activated Ala-AMP. The other activity is designated 'posttransfer' editing and involves deacylation of mischarged Ala-tRNA(Pro). The misacylated Cys-tRNA(Pro) is not edited by ProRS. This is Proline--tRNA ligase from Actinobacillus succinogenes (strain ATCC 55618 / DSM 22257 / CCUG 43843 / 130Z).